The sequence spans 144 residues: Large ribosomal subunit protein uL15 (144 aa).

The tract at residues 1 to 54 is disordered; it reads MRLNTLSPAPGRVSAKKRVGRGIGSGLGKTAGRGHKGLKSRSGGSVKPGFEGGQ. The segment covering 21-31 has biased composition (gly residues); it reads RGIGSGLGKTA.

Belongs to the universal ribosomal protein uL15 family. In terms of assembly, part of the 50S ribosomal subunit.

Functionally, binds to the 23S rRNA. The sequence is that of Large ribosomal subunit protein uL15 from Saccharophagus degradans (strain 2-40 / ATCC 43961 / DSM 17024).